Here is a 294-residue protein sequence, read N- to C-terminus: Acetylglutamate kinase (294 aa).

Substrate-binding positions include 69 to 70 (GG), R91, and N190.

It belongs to the acetylglutamate kinase family. ArgB subfamily.

It localises to the cytoplasm. It carries out the reaction N-acetyl-L-glutamate + ATP = N-acetyl-L-glutamyl 5-phosphate + ADP. It functions in the pathway amino-acid biosynthesis; L-arginine biosynthesis; N(2)-acetyl-L-ornithine from L-glutamate: step 2/4. Catalyzes the ATP-dependent phosphorylation of N-acetyl-L-glutamate. This Mycobacterium tuberculosis (strain CDC 1551 / Oshkosh) protein is Acetylglutamate kinase.